The chain runs to 153 residues: Transcriptional repressor NrdR (153 aa).

Residues 3–34 (CPFCNHLHDKVVDSRESKEGDAIRRRRECLEC) fold into a zinc finger. Residues 49–139 (YMVVKKDGRR…VYRDFQDEQA (91 aa)) enclose the ATP-cone domain.

This sequence belongs to the NrdR family. Zn(2+) serves as cofactor.

In terms of biological role, negatively regulates transcription of bacterial ribonucleotide reductase nrd genes and operons by binding to NrdR-boxes. This is Transcriptional repressor NrdR from Solibacter usitatus (strain Ellin6076).